The sequence spans 548 residues: BTB/POZ domain-containing protein At5g17580 (548 aa).

Positions 7–74 (SDLHINVKGV…CNGSEFKFTS (68 aa)) constitute a BTB domain. The NPH3 domain maps to 180-442 (DWKSEDLITI…VNVLCVSQLQ (263 aa)). Tyr-383 is modified (phosphotyrosine). The stretch at 442–493 (QIRDTVAKEIKGMEEKVDEEEEEEIEVSSDEDEMEKMSNKLLGLEIENDECV) forms a coiled coil.

Belongs to the NPH3 family.

It participates in protein modification; protein ubiquitination. In terms of biological role, may act as a substrate-specific adapter of an E3 ubiquitin-protein ligase complex (CUL3-RBX1-BTB) which mediates the ubiquitination and subsequent proteasomal degradation of target proteins. The sequence is that of BTB/POZ domain-containing protein At5g17580 from Arabidopsis thaliana (Mouse-ear cress).